The sequence spans 286 residues: ATP synthase gamma chain (286 aa).

It belongs to the ATPase gamma chain family. In terms of assembly, F-type ATPases have 2 components, CF(1) - the catalytic core - and CF(0) - the membrane proton channel. CF(1) has five subunits: alpha(3), beta(3), gamma(1), delta(1), epsilon(1). CF(0) has three main subunits: a, b and c.

Its subcellular location is the cell membrane. In terms of biological role, produces ATP from ADP in the presence of a proton gradient across the membrane. The gamma chain is believed to be important in regulating ATPase activity and the flow of protons through the CF(0) complex. The polypeptide is ATP synthase gamma chain (Oceanobacillus iheyensis (strain DSM 14371 / CIP 107618 / JCM 11309 / KCTC 3954 / HTE831)).